The following is a 363-amino-acid chain: Dihydroorotate dehydrogenase (quinone) (363 aa).

FMN contacts are provided by residues 62 to 66 and T86; that span reads AGYDK. K66 is a substrate binding site. 111-115 serves as a coordination point for substrate; that stretch reads NRLGF. Residues N140 and N171 each coordinate FMN. Residue N171 coordinates substrate. The active-site Nucleophile is S174. N176 provides a ligand contact to substrate. FMN is bound by residues K216 and S244. Residue 245–246 participates in substrate binding; the sequence is NT. FMN-binding positions include G266, G295, and 316–317; that span reads YT.

This sequence belongs to the dihydroorotate dehydrogenase family. Type 2 subfamily. In terms of assembly, monomer. FMN is required as a cofactor.

It localises to the cell membrane. The catalysed reaction is (S)-dihydroorotate + a quinone = orotate + a quinol. It participates in pyrimidine metabolism; UMP biosynthesis via de novo pathway; orotate from (S)-dihydroorotate (quinone route): step 1/1. Catalyzes the conversion of dihydroorotate to orotate with quinone as electron acceptor. This chain is Dihydroorotate dehydrogenase (quinone), found in Chelativorans sp. (strain BNC1).